Reading from the N-terminus, the 289-residue chain is Ribonuclease H2 subunit A (289 aa).

The region spanning Pro-20–Phe-249 is the RNase H type-2 domain. Residues Asp-26, Glu-27, and Asp-134 each contribute to the a divalent metal cation site.

This sequence belongs to the RNase HII family. Eukaryotic subfamily. It depends on Mn(2+) as a cofactor. Mg(2+) serves as cofactor.

It catalyses the reaction Endonucleolytic cleavage to 5'-phosphomonoester.. Functionally, endonuclease that specifically degrades the RNA of RNA-DNA hybrids. Participates in DNA replication. This is Ribonuclease H2 subunit A (rnaseh2A) from Dictyostelium discoideum (Social amoeba).